A 76-amino-acid chain; its full sequence is Small proline-rich protein 2I (76 aa).

A run of 3 repeats spans residues 21-29 (KKCPEPCPP), 30-38 (PQCPEPCPP), and 39-47 (PKCPEPCPE). A 3 X 9 AA approximate tandem repeats region spans residues 21-47 (KKCPEPCPPPQCPEPCPPPKCPEPCPE). Residues 40 to 53 (KCPEPCPESCPPPS) are compositionally biased toward pro residues. Positions 40–76 (KCPEPCPESCPPPSYQQKCPPVQPPPPCQQKCPPKSK) are disordered.

It belongs to the cornifin (SPRR) family. Not expressed in uterus.

It is found in the cytoplasm. In terms of biological role, cross-linked envelope protein of keratinocytes. It is a keratinocyte protein that first appears in the cell cytosol, but ultimately becomes cross-linked to membrane proteins by transglutaminase. All that results in the formation of an insoluble envelope beneath the plasma membrane. This is Small proline-rich protein 2I (Sprr2i) from Mus musculus (Mouse).